A 159-amino-acid chain; its full sequence is SsrA-binding protein (159 aa).

A compositionally biased stretch (basic and acidic residues) spans 133–147 (KRQDLAKRDAQREMA). The interval 133–159 (KRQDLAKRDAQREMARAAGRRSKGMDD) is disordered. Residues 150–159 (AGRRSKGMDD) show a composition bias toward basic residues.

Belongs to the SmpB family.

The protein resides in the cytoplasm. Its function is as follows. Required for rescue of stalled ribosomes mediated by trans-translation. Binds to transfer-messenger RNA (tmRNA), required for stable association of tmRNA with ribosomes. tmRNA and SmpB together mimic tRNA shape, replacing the anticodon stem-loop with SmpB. tmRNA is encoded by the ssrA gene; the 2 termini fold to resemble tRNA(Ala) and it encodes a 'tag peptide', a short internal open reading frame. During trans-translation Ala-aminoacylated tmRNA acts like a tRNA, entering the A-site of stalled ribosomes, displacing the stalled mRNA. The ribosome then switches to translate the ORF on the tmRNA; the nascent peptide is terminated with the 'tag peptide' encoded by the tmRNA and targeted for degradation. The ribosome is freed to recommence translation, which seems to be the essential function of trans-translation. This is SsrA-binding protein from Salinispora arenicola (strain CNS-205).